Here is a 2465-residue protein sequence, read N- to C-terminus: Serine/threonine-protein kinase TOR (2465 aa).

HEAT repeat units follow at residues 184–221, 271–308, 348–389, 549–587, 588–625, 717–755, 761–799, 888–926, 981–1018, 1022–1059, and 1061–1098; these read VHVP…VIEK, SRYR…FLRD, AELV…AMGP, RLVE…FDDF, LAQA…KNPA, QYLP…STGY, NEYP…LDPH, PYLP…IVRQ, MYIL…VFGG, EHMH…TVQV, and THVS…ALGE. A disordered region spans residues 1158-1191; it reads DFGGVPSEEADETQRQPRSHQVNDVRLRSAGEAS. The 581-residue stretch at 1297–1877 folds into the FAT domain; sequence LLGALAEKCR…MYPLLVACKS (581 aa). One can recognise a PI3K/PI4K catalytic domain in the interval 2051-2369; that stretch reads FVPQLIVITS…PPRGAREREL (319 aa). The G-loop stretch occupies residues 2057-2063; sequence VITSKQR. The catalytic loop stretch occupies residues 2230 to 2238; it reads GLGDRHPSN. The tract at residues 2250-2275 is activation loop; that stretch reads HIDFGDCFEASMNREKFPEKVPFRLT. The disordered stretch occupies residues 2401–2431; the sequence is RDFSSGSSLSGAGSSTQHGNEHLASGDTREV. Residues 2404–2415 show a composition bias toward low complexity; sequence SSGSSLSGAGSS. The FATC domain occupies 2433–2465; sequence PGLSVKVQVQRLILQATSHENLCQNYVGWCPFW.

The protein belongs to the PI3/PI4-kinase family. As to quaternary structure, the target of rapamycin complex 1 (TORC1) is composed of at least RAPTOR, LST8 and TOR.

It catalyses the reaction L-seryl-[protein] + ATP = O-phospho-L-seryl-[protein] + ADP + H(+). It carries out the reaction L-threonyl-[protein] + ATP = O-phospho-L-threonyl-[protein] + ADP + H(+). Insensitive to inhibition by rapamycin. Component of TORC1 complex, which is an essential cell growth regulator that controls plant development. Acts through the phosphorylation of downstream effectors that are recruited by the binding partner RAPTOR. Acts by activating transcription, protein synthesis and ribosome biogenesis, and inhibiting mRNA degradation and autophagy. The chain is Serine/threonine-protein kinase TOR from Oryza sativa subsp. japonica (Rice).